A 226-amino-acid polypeptide reads, in one-letter code: Octanoyltransferase (226 aa).

A BPL/LPL catalytic domain is found at 31 to 226 (PETPDALWIC…SQKLGTYLAP (196 aa)). Residues 70–77 (RGGQVTFH), 159–161 (ALG), and 172–174 (GVA) contribute to the substrate site. Cys-190 serves as the catalytic Acyl-thioester intermediate.

The protein belongs to the LipB family.

The protein localises to the cytoplasm. The enzyme catalyses octanoyl-[ACP] + L-lysyl-[protein] = N(6)-octanoyl-L-lysyl-[protein] + holo-[ACP] + H(+). It functions in the pathway protein modification; protein lipoylation via endogenous pathway; protein N(6)-(lipoyl)lysine from octanoyl-[acyl-carrier-protein]: step 1/2. In terms of biological role, catalyzes the transfer of endogenously produced octanoic acid from octanoyl-acyl-carrier-protein onto the lipoyl domains of lipoate-dependent enzymes. Lipoyl-ACP can also act as a substrate although octanoyl-ACP is likely to be the physiological substrate. The polypeptide is Octanoyltransferase (Variovorax paradoxus (strain S110)).